A 519-amino-acid chain; its full sequence is Flavonoid 8-hydroxylase 2, chloroplastic (519 aa).

The transit peptide at 1-46 (MEVLQASSLSFQLLRRHSRNNLINKFRNPSLPRIHMPRQNIDLKTF) directs the protein to the chloroplast. A Rieske domain is found at 77 to 188 (WYPVASVCDL…SCVRNGIVWF (112 aa)). [2Fe-2S] cluster is bound by residues Cys-119, His-121, Cys-139, and His-142. The Fe cation site is built by His-241 and His-246. Positions 447–450 (CSSC) match the Redox-active motif motif. The next 2 membrane-spanning stretches (helical) occupy residues 462-478 (IGLQAMSLVFVAMAAAV) and 485-501 (YSMVAMAVLSFLASKWL).

[2Fe-2S] cluster serves as cofactor. In terms of tissue distribution, glandular trichome-specific expression in leaves.

Its subcellular location is the plastid. The protein resides in the chloroplast membrane. It localises to the cytoplasm. The enzyme catalyses salvigenin + 2 reduced [2Fe-2S]-[ferredoxin] + O2 + 2 H(+) = 8-hydroxysalvigenin + 2 oxidized [2Fe-2S]-[ferredoxin] + H2O. The protein operates within flavonoid metabolism. Its function is as follows. Rieske-type, PAO-family oxygenase involved in the biosynthesis of polymethoxylated flavonoids natural products such as nevadensin and salvigenin, aroma compounds which contribute to the flavor of sweet basil, and exhibit pharmacological activities such as anti-allergic, anti-oxidant, antibacterial, anti-proliferative, and anti-inflammatory effects. Catalyzes the hydroxylation of salvigenin to produce 8-hydroxysalvigenin (8-OH-SALV). The protein is Flavonoid 8-hydroxylase 2, chloroplastic of Ocimum basilicum (Sweet basil).